A 450-amino-acid chain; its full sequence is Phosphoglucosamine mutase (450 aa).

The Phosphoserine intermediate role is filled by serine 101. 4 residues coordinate Mg(2+): serine 101, aspartate 242, aspartate 244, and aspartate 246. Position 101 is a phosphoserine (serine 101).

The protein belongs to the phosphohexose mutase family. Mg(2+) is required as a cofactor. Post-translationally, activated by phosphorylation.

It catalyses the reaction alpha-D-glucosamine 1-phosphate = D-glucosamine 6-phosphate. In terms of biological role, catalyzes the conversion of glucosamine-6-phosphate to glucosamine-1-phosphate. The protein is Phosphoglucosamine mutase of Rhodopseudomonas palustris (strain BisB5).